Consider the following 105-residue polypeptide: MAEWNGEYVSPYAEHGKKSEQVKKITVSIPLKVLKILTDERTRRQVNNLRHATNSELLCEAFLHAFTGQPLPNDEDLRKERSDEIPEAAKIIMREMGIDPDTWEY.

This sequence belongs to the MetJ family. In terms of assembly, homodimer.

It localises to the cytoplasm. Its function is as follows. This regulatory protein, when combined with SAM (S-adenosylmethionine) represses the expression of the methionine regulon and of enzymes involved in SAM synthesis. The polypeptide is Met repressor (Pectobacterium carotovorum subsp. carotovorum (strain PC1)).